Consider the following 201-residue polypeptide: 3-isopropylmalate dehydratase small subunit (201 aa).

It belongs to the LeuD family. LeuD type 1 subfamily. Heterodimer of LeuC and LeuD.

It catalyses the reaction (2R,3S)-3-isopropylmalate = (2S)-2-isopropylmalate. The protein operates within amino-acid biosynthesis; L-leucine biosynthesis; L-leucine from 3-methyl-2-oxobutanoate: step 2/4. In terms of biological role, catalyzes the isomerization between 2-isopropylmalate and 3-isopropylmalate, via the formation of 2-isopropylmaleate. The chain is 3-isopropylmalate dehydratase small subunit from Methylorubrum populi (strain ATCC BAA-705 / NCIMB 13946 / BJ001) (Methylobacterium populi).